The following is a 297-amino-acid chain: Cell division protein FtsQ (297 aa).

Residues Met1–Pro33 are Cytoplasmic-facing. Residues Leu34–Trp54 form a helical membrane-spanning segment. The Periplasmic segment spans residues Leu55–Glu297. Residues Phe82 to Arg150 enclose the POTRA domain.

Belongs to the FtsQ/DivIB family. FtsQ subfamily.

The protein resides in the cell inner membrane. In terms of biological role, essential cell division protein. The sequence is that of Cell division protein FtsQ from Dinoroseobacter shibae (strain DSM 16493 / NCIMB 14021 / DFL 12).